The chain runs to 363 residues: Type 3 secretion system translocon protein SctB (363 aa).

Polar residues predominate over residues 1 to 16 (MEIQNTKPTQTLYTDI). The disordered stretch occupies residues 1–30 (MEIQNTKPTQTLYTDISTKQTQSSSETQKS). Residues 17–30 (STKQTQSSSETQKS) are compositionally biased toward low complexity. The interval 33–73 (YQQIAAHIPLNVGKNPVLTTTLNDDQLLKLSEQVQHDSEII) is ipgC chaperone binding domain. A helical transmembrane segment spans residues 99–120 (ISSLSSNAVSLIISVAVLLSAL).

This sequence belongs to the SctB/SipC family. As to quaternary structure, the core secretion machinery of the T3SS is composed of approximately 20 different proteins, including cytoplasmic components, a base, an export apparatus and a needle. This subunit is involved in the formation of a pore, called the translocon, in host membrane. Interacts with IpaB/SctE. Interacts with the molecular chaperone IpgC, which prevents premature association with IpaB/SctE within the cytoplasm of Shigella cells. Does not interact with CDC42 or RAC1 GTPases in vitro.

It is found in the secreted. It localises to the host membrane. Interaction with the membrane is affected by the pH. Component of the type III secretion system (T3SS), also called injectisome, which is used to inject bacterial effector proteins into eukaryotic host cells. IpaB/SctE and IpaC/SctB are inserted into the host membrane where they form a pore and allow the translocation of effector proteins into the cytosol of target cells. Induction and secretion of IpaC/SctB comprise the final step in triggering the induction of full type III secretion. In terms of biological role, required for efficient dissemination. Necessary for lysis of the two cellular membranes that surround bacteria in protrusions during cell-to-cell spread. Contribute to actin nucleation in vitro, which may be a necessary step in Shigella invasion. The sequence is that of Type 3 secretion system translocon protein SctB from Shigella flexneri.